A 189-amino-acid polypeptide reads, in one-letter code: GTPase HRas (189 aa).

Residue M1 is modified to N-acetylmethionine; in GTPase HRas; alternate. The residue at position 2 (T2) is an N-acetylthreonine; in GTPase HRas, N-terminally processed. Residues 13-18, 29-35, 59-60, 116-119, and 145-147 each bind GTP; these read GVGKSA, VDEYDPT, AG, NKCD, and SAK. An Effector region motif is present at residues 32 to 40; the sequence is YDPTIEDSY. T35 carries (Microbial infection) O-linked (Glc) threonine; by P.sordellii toxin TcsL glycosylation. C118 bears the S-nitrosocysteine mark. A hypervariable region region spans residues 166–185; it reads HKLRKLNPPDESGPGCMSCK. K170 participates in a covalent cross-link: Glycyl lysine isopeptide (Lys-Gly) (interchain with G-Cter in ubiquitin). C181 carries the S-palmitoyl cysteine lipid modification. Residue C184 is the site of S-(15-deoxy-Delta12,14-prostaglandin J2-9-yl)cysteine; alternate attachment. C184 is lipidated: S-palmitoyl cysteine; alternate. Cysteine methyl ester is present on C186. The S-farnesyl cysteine moiety is linked to residue C186. A propeptide spans 187–189 (removed in mature form); it reads VLS.

Belongs to the small GTPase superfamily. Ras family. As to quaternary structure, in its GTP-bound form interacts with PLCE1. Interacts with TBC1D10C. Interacts with RGL3. Interacts with HSPD1. Found in a complex with at least BRAF, HRAS, MAP2K1, MAPK3 and RGS14. Interacts (active GTP-bound form) with RGS14 (via RBD 1 domain). Forms a signaling complex with RASGRP1 and DGKZ. Interacts with RASSF5. Interacts with PDE6D. Interacts with IKZF3. Interacts with RACK1. Interacts with PIK3CG; the interaction is required for membrane recruitment and beta-gamma G protein dimer-dependent activation of the PI3K gamma complex PIK3CG:PIK3R6. Interacts with RAPGEF2. Interacts (active GTP-bound form) with both SHOC2 and PP1c (all isoforms) to form a tertiary complex; SHOC2 and PP1c preferably bind M-Ras/MRAS, but they also bind K-Ras/KRAS, N-Ras/NRAS and H-Ras/HRAS. Interacts (GTP-bound form) with MAPKAP1/SIN1; inhibiting H-Ras/HRAS activity. Post-translationally, palmitoylated by the ZDHHC9-GOLGA7 complex. A continuous cycle of de- and re-palmitoylation regulates rapid exchange between plasma membrane and Golgi. S-nitrosylated; critical for redox regulation. Important for stimulating guanine nucleotide exchange. No structural perturbation on nitrosylation. In terms of processing, the covalent modification of cysteine by 15-deoxy-Delta12,14-prostaglandin-J2 is autocatalytic and reversible. It may occur as an alternative to other cysteine modifications, such as S-nitrosylation and S-palmitoylation. Post-translationally, acetylation at Lys-104 prevents interaction with guanine nucleotide exchange factors (GEFs). Fatty-acylated at Lys-170. In terms of processing, ubiquitinated by the BCR(LZTR1) E3 ubiquitin ligase complex at Lys-170 in a non-degradative manner, leading to inhibit Ras signaling by decreasing Ras association with membranes. Post-translationally, (Microbial infection) Glucosylated at Thr-35 by P.sordellii toxin TcsL. Monoglucosylation completely prevents the recognition of the downstream effector, blocking the GTPases in their inactive form, leading to inhibit Ras signaling. In terms of tissue distribution, widely expressed.

It is found in the cell membrane. It localises to the golgi apparatus. Its subcellular location is the golgi apparatus membrane. The protein resides in the nucleus. The protein localises to the cytoplasm. It is found in the perinuclear region. It catalyses the reaction GTP + H2O = GDP + phosphate + H(+). Its activity is regulated as follows. Alternates between an inactive form bound to GDP and an active form bound to GTP. Activated by a guanine nucleotide-exchange factor (GEF) and inactivated by a GTPase-activating protein (GAP). In terms of biological role, involved in the activation of Ras protein signal transduction. Ras proteins bind GDP/GTP and possess intrinsic GTPase activity. The sequence is that of GTPase HRas (HRAS) from Homo sapiens (Human).